The chain runs to 255 residues: Phosphatidylcholine synthase (255 aa).

Over 1 to 13 (MNPIKPPFTLNQY) the chain is Cytoplasmic. A helical transmembrane segment spans residues 14-34 (FAAWFVHVFTASAACIGVFSL). The Periplasmic portion of the chain corresponds to 35 to 42 (YKIYQHDY). Residues 43 to 63 (VFALWLMAITVFIDAVDGSLA) traverse the membrane as a helical segment. Topologically, residues 64-76 (RLVHVKSVLPKID) are cytoplasmic. The helical transmembrane segment at 77–97 (GALLDNIVDYLNYVITPCFFL) threads the bilayer. The Periplasmic portion of the chain corresponds to 98–103 (LVKPGM). The helical transmembrane segment at 104-124 (LPADYVVPITAAITITSAYQF) threads the bilayer. The Cytoplasmic segment spans residues 125–133 (CQDDAKTPD). Residues 134-154 (HFFKGFPCYWNITVFYMYIFN) form a helical membrane-spanning segment. Thr155 is a topological domain (periplasmic). A helical transmembrane segment spans residues 156–175 (SMIVNTVLLSLFCVLIFIPV). The Cytoplasmic segment spans residues 176–190 (KYVYPSRLDYLTESR). The chain crosses the membrane as a helical span at residues 191-211 (VLKILMHCCSALYGISSFCLL). At 212–217 (VNYPET) the chain is on the periplasmic side. Residues 218-238 (NKLWVSLSLGYVGMYLFLSFY) form a helical membrane-spanning segment. Residues 239-255 (RTYYPMFKAKITANNKD) lie on the Cytoplasmic side of the membrane.

This sequence belongs to the CDP-alcohol phosphatidyltransferase class-I family. Requires Mn(2+) as cofactor.

It localises to the cell inner membrane. It catalyses the reaction a CDP-1,2-diacyl-sn-glycerol + choline = a 1,2-diacyl-sn-glycero-3-phosphocholine + CMP + H(+). Condenses choline with CDP-diglyceride to produce phosphatidylcholine and CMP. Affects virulence of this bacterium when there is a complete loss of phosphatidylcholine formation due to absence of both the synthase (pcs) and the methylation (pmtA) pathways. Reduced virulence results from lowered yields of bacteria within host macrophages and because of loss of high multiplicity cytotoxicity. The chain is Phosphatidylcholine synthase from Legionella pneumophila subsp. pneumophila (strain Philadelphia 1 / ATCC 33152 / DSM 7513).